A 434-amino-acid chain; its full sequence is Probable carboxypeptidase BDCG_03757 (434 aa).

Positions methionine 1–alanine 20 are cleaved as a signal peptide. N-linked (GlcNAc...) asparagine glycans are attached at residues asparagine 136 and asparagine 150. Aspartate 160 is a binding site for Zn(2+). Glutamate 192 serves as the catalytic Proton acceptor. Position 193 (glutamate 193) interacts with Zn(2+). An N-linked (GlcNAc...) asparagine glycan is attached at asparagine 343.

It belongs to the peptidase M20A family. Requires Zn(2+) as cofactor.

It localises to the secreted. The polypeptide is Probable carboxypeptidase BDCG_03757 (Ajellomyces dermatitidis (strain ER-3 / ATCC MYA-2586) (Blastomyces dermatitidis)).